The sequence spans 232 residues: Orotidine 5'-phosphate decarboxylase (232 aa).

Substrate is bound by residues Asp-11, Lys-33, 61-70 (DMKLFDIGAT), Thr-116, Arg-179, Gln-188, Gly-208, and Arg-209. Residue Lys-63 is the Proton donor of the active site.

It belongs to the OMP decarboxylase family. Type 1 subfamily. As to quaternary structure, homodimer.

It catalyses the reaction orotidine 5'-phosphate + H(+) = UMP + CO2. It participates in pyrimidine metabolism; UMP biosynthesis via de novo pathway; UMP from orotate: step 2/2. Functionally, catalyzes the decarboxylation of orotidine 5'-monophosphate (OMP) to uridine 5'-monophosphate (UMP). The polypeptide is Orotidine 5'-phosphate decarboxylase (Cereibacter sphaeroides (strain ATCC 17023 / DSM 158 / JCM 6121 / CCUG 31486 / LMG 2827 / NBRC 12203 / NCIMB 8253 / ATH 2.4.1.) (Rhodobacter sphaeroides)).